A 295-amino-acid polypeptide reads, in one-letter code: MSWLSKLMPSGIRTENTPAKKRSVPEGLWEKCSNCGSALYGPELEENLEVCPKCDHHMAIRARARLNSLFDPDTATTEIAAQLGPVDALKFKDQKRYGERIKASQKASGEYDALIAMRGTLKGNPLVAAAFDFAFMGGSMGSVVGERFARAAEVALEVGCPFVCFSASGGARMQEGLFSLMQMAKTSAALGRLREAGLPYISVLTHPTTGGVSASFAMLGDINIAEPHALIGFAGPRVIEQTVRETLPEGFQRSEFLLDHGTIDQICDRRQMRDRIAELTAMMMRQPHPQDADAA.

The disordered stretch occupies residues 1 to 20 (MSWLSKLMPSGIRTENTPAK). Positions 28–295 (LWEKCSNCGS…QPHPQDADAA (268 aa)) constitute a CoA carboxyltransferase N-terminal domain. Residues cysteine 32, cysteine 35, cysteine 51, and cysteine 54 each coordinate Zn(2+). The segment at 32–54 (CSNCGSALYGPELEENLEVCPKC) adopts a C4-type zinc-finger fold.

It belongs to the AccD/PCCB family. As to quaternary structure, acetyl-CoA carboxylase is a heterohexamer composed of biotin carboxyl carrier protein (AccB), biotin carboxylase (AccC) and two subunits each of ACCase subunit alpha (AccA) and ACCase subunit beta (AccD). It depends on Zn(2+) as a cofactor.

The protein localises to the cytoplasm. It catalyses the reaction N(6)-carboxybiotinyl-L-lysyl-[protein] + acetyl-CoA = N(6)-biotinyl-L-lysyl-[protein] + malonyl-CoA. It functions in the pathway lipid metabolism; malonyl-CoA biosynthesis; malonyl-CoA from acetyl-CoA: step 1/1. Functionally, component of the acetyl coenzyme A carboxylase (ACC) complex. Biotin carboxylase (BC) catalyzes the carboxylation of biotin on its carrier protein (BCCP) and then the CO(2) group is transferred by the transcarboxylase to acetyl-CoA to form malonyl-CoA. This chain is Acetyl-coenzyme A carboxylase carboxyl transferase subunit beta, found in Xanthomonas axonopodis pv. citri (strain 306).